A 187-amino-acid polypeptide reads, in one-letter code: UPF0301 protein PMI0339 (187 aa).

It belongs to the UPF0301 (AlgH) family.

The sequence is that of UPF0301 protein PMI0339 from Proteus mirabilis (strain HI4320).